The chain runs to 337 residues: P2Y purinoceptor 14 (337 aa).

Residues Met1–Tyr28 lie on the Extracellular side of the membrane. Asn2 carries N-linked (GlcNAc...) asparagine glycosylation. The chain crosses the membrane as a helical span at residues Phe29–Val49. The Cytoplasmic portion of the chain corresponds to Pro50 to Ser54. The helical transmembrane segment at Phe55 to Phe75 threads the bilayer. The Extracellular segment spans residues Lys76–Val95. The cysteines at positions 93 and 171 are disulfide-linked. Residues Ser96–Phe116 traverse the membrane as a helical segment. The Cytoplasmic segment spans residues Asp117 to Lys138. A helical membrane pass occupies residues Leu139–Thr159. Residues Asn160–Ser187 lie on the Extracellular side of the membrane. Asn162 carries an N-linked (GlcNAc...) asparagine glycan. Residues Tyr188–Ile208 traverse the membrane as a helical segment. The Cytoplasmic portion of the chain corresponds to Thr209–Asn233. Residues Ile234 to Pro254 traverse the membrane as a helical segment. Residues Tyr255–Glu277 are Extracellular-facing. The chain crosses the membrane as a helical span at residues Phe278–Cys298. Residues Gln299–Leu337 are Cytoplasmic-facing.

Belongs to the G-protein coupled receptor 1 family.

The protein resides in the cell membrane. Its function is as follows. Receptor for UDP-glucose and other UDP-sugar coupled to G-proteins. Not activated by ATP, ADP, UTP or ATP. In Bos taurus (Bovine), this protein is P2Y purinoceptor 14 (P2RY14).